The chain runs to 420 residues: MKWLVILGLVALSDCLVMIPLTKVKSVRESLREKGLLKNFLKEHPYNMIQNLLSKNSSHVQKFSYQPLRNYLDMVYVGNISIGTPPQQFSVVFDTGSSDLWVPSIYCKSKACVTHRSFNPSHSSTFHDRGKSIKLEYGSGKMSGFLGQDTVRIGQLTSTGQAFGLSKEETGKAFEHAIFDGILGLAYPSIAIKGTTTVIDNLKKQDQISEPVFAFYLSSDKEEGSVVMFGGVDKKYYKGDLKWVPLTQTSYWQIALDRITCRGRVIGCPRGCQAIVDTGTSMLHGPSKAVAKIHSLIKHFEKEYVVPCNARKALPDIVFTINNVDYPVPAQAYIRKYVVPCNARKALPDIVFTINNVDYPVPAQAYIRKNANNNRCYSTFEDIMDTLNQREIWILGDVFLRLYFTVYDEGQNRIGLAQAT.

Residues 1-15 form the signal peptide; sequence MKWLVILGLVALSDC. 2 N-linked (GlcNAc...) asparagine glycosylation sites follow: N56 and N79. Residues 76 to 417 form the Peptidase A1 domain; the sequence is YVGNISIGTP…DEGQNRIGLA (342 aa). D94 is a catalytic residue. Intrachain disulfides connect C107/C112 and C268/C272. D277 is a catalytic residue. A disulfide bridge connects residues C341 and C376.

This sequence belongs to the peptidase A1 family. In terms of tissue distribution, expressed throughout the chorion, with the signal localized exclusively over the trophectoderm.

The protein resides in the secreted. Its subcellular location is the extracellular space. The chain is Pregnancy-associated glycoprotein 2 (PAG2) from Sus scrofa (Pig).